The following is a 356-amino-acid chain: Glycoprotein 42 (356 aa).

The first 32 residues, 1–32, serve as a signal peptide directing secretion; it reads MEGPAFSKPLKDKINPWGPLIVLGILIRAGVS. Over 33–331 the chain is Virion surface; sequence VQRDSPHQVF…VLGTNSNHTT (299 aa). N-linked (GlcNAc...) asparagine; by host glycosylation is found at asparagine 43 and asparagine 58. Positions 247 to 279 are disordered; sequence RPAQIMLPRPPQPPPPGTASIVPETAPPSQQPG. The segment covering 254 to 263 has biased composition (pro residues); the sequence is PRPPQPPPPG. A glycan (N-linked (GlcNAc...) asparagine; by host) is linked at asparagine 296. A CXXC motif is present at residues 306–309; that stretch reads CWLC. Asparagine 328 is a glycosylation site (N-linked (GlcNAc...) asparagine; by host). Residues 332–352 form a helical membrane-spanning segment; the sequence is LISTIMGLLIILLLLLILLLW. Residues 353–356 are Intravirion-facing; sequence TLHS.

In terms of assembly, homooligomer. Forms heterooligomers with mouse EPOR, probably via their respective transmembrane domains. BB6 deletion mutant does not interact with mouse MST1R isoform sf-Stk.

It localises to the host endoplasmic reticulum membrane. The protein resides in the host cell membrane. It is found in the virion membrane. This envelope-like membrane glycoprotein is responsible for ligand-independent activation of the erythropoietin receptor EPOR leading to the abnormally rapid proliferation of erythroid precursor cells. In the first stage of Friend disease, constitutive activation of the EPOR by gp42 causes uncontrolled, polyclonal proliferation of infected erythroblasts, leading to polycythemia (massive increase in the number of mature red cells). Host susceptibility to SSFV-induced erythroblastosis usually depends on the expression of the truncated isoform of MST1R receptor tyrosine kinase (MST1R isoform sf-Stk), but the deletion mutant BB6 apparently can overcome its absence. This is Glycoprotein 42 (env) from Mus musculus (Mouse).